The chain runs to 194 residues: MAAMSEEGSCVNFKEMMFIDNTLYLIPEDNGDLESDHFGRLHCTTAVIRSINDQVLFVDKRNPPVFEDMPDIDRTANESQTRLIIYMYKDSEVRGLAVTLSVKDGRMSTLSCKNKIISFEEMNPPENIDDIKSDLIFFQKRVPGHNKMEFESSLYEGHFLACQKEDDAFKLVLKRKDENGDKSVMFTLTNLHQS.

The propeptide occupies 1 to 36 (MAAMSEEGSCVNFKEMMFIDNTLYLIPEDNGDLESD).

Belongs to the IL-1 family. In terms of assembly, forms a ternary complex with ligand-binding receptor subunit IL18R1 and signaling receptor subunit IL18RAP at the plasma membrane. Mature IL18 first binds to IL18R1 forming a low affinity binary complex, which then interacts with IL18RAP to form a high affinity ternary complex that signals inside the cell. Interacts with cargo receptor TMED10; the interaction mediates the translocation from the cytoplasm into the ERGIC (endoplasmic reticulum-Golgi intermediate compartment) and thereby secretion. Post-translationally, the pro-IL-18 precursor is processed by CASP1 to yield its mature, active form. The pro-IL-18 precursor is however not processed by Casp4/Casp11 in rodents. The pro-IL-18 precursor features autoinhibitory interactions between the propeptide and the post-cleavage-site region, preventing recognition by the IL18R1 receptor. Processing by CASP1 induces conformational changes to generate critical receptor-binding sites. The mature form is then secreted and released in the extracellular milieu by passing through the gasdermin-D (GSDMD) pore. In contrast, cleavage by CASP3 inactivates IL18.

It is found in the cytoplasm. The protein localises to the cytosol. Its subcellular location is the secreted. Functionally, pro-inflammatory cytokine primarily involved in epithelial barrier repair, polarized T-helper 1 (Th1) cell and natural killer (NK) cell immune responses. Upon binding to IL18R1 and IL18RAP, forms a signaling ternary complex which activates NF-kappa-B, triggering synthesis of inflammatory mediators. Synergizes with IL12/interleukin-12 to induce IFNG synthesis from T-helper 1 (Th1) cells and natural killer (NK) cells. Involved in transduction of inflammation downstream of pyroptosis: its mature form is specifically released in the extracellular milieu by passing through the gasdermin-D (GSDMD) pore. The sequence is that of Interleukin-18 (Il18) from Rattus norvegicus (Rat).